Reading from the N-terminus, the 392-residue chain is uncharacterized protein (392 aa).

A J domain is found at Thr7–Glu76. Ser108 is modified (phosphoserine).

This is an uncharacterized protein from Schizosaccharomyces pombe (strain 972 / ATCC 24843) (Fission yeast).